The following is a 158-amino-acid chain: Small ribosomal subunit protein uS7 (158 aa).

This sequence belongs to the universal ribosomal protein uS7 family. Part of the 30S ribosomal subunit. Contacts proteins S9 and S11.

One of the primary rRNA binding proteins, it binds directly to 16S rRNA where it nucleates assembly of the head domain of the 30S subunit. Is located at the subunit interface close to the decoding center, probably blocks exit of the E-site tRNA. The polypeptide is Small ribosomal subunit protein uS7 (Gluconacetobacter diazotrophicus (strain ATCC 49037 / DSM 5601 / CCUG 37298 / CIP 103539 / LMG 7603 / PAl5)).